A 74-amino-acid chain; its full sequence is Putative membrane protein insertion efficiency factor (74 aa).

This sequence belongs to the UPF0161 family.

The protein resides in the cell inner membrane. Functionally, could be involved in insertion of integral membrane proteins into the membrane. This Syntrophus aciditrophicus (strain SB) protein is Putative membrane protein insertion efficiency factor.